A 400-amino-acid chain; its full sequence is Phosphoglycerate kinase (400 aa).

Substrate-binding positions include 21-23 (DFN), R37, 60-63 (HFGR), R119, and R152. Residues K205, G296, E327, and 353 to 356 (GGDT) each bind ATP.

This sequence belongs to the phosphoglycerate kinase family. As to quaternary structure, monomer.

The protein resides in the cytoplasm. The catalysed reaction is (2R)-3-phosphoglycerate + ATP = (2R)-3-phospho-glyceroyl phosphate + ADP. Its pathway is carbohydrate degradation; glycolysis; pyruvate from D-glyceraldehyde 3-phosphate: step 2/5. The polypeptide is Phosphoglycerate kinase (Aliarcobacter butzleri (strain RM4018) (Arcobacter butzleri)).